The chain runs to 788 residues: Endonuclease MutS2 (788 aa).

Position 334–341 (Gly-334–Thr-341) interacts with ATP. A Smr domain is found at Leu-713 to Gln-788.

The protein belongs to the DNA mismatch repair MutS family. MutS2 subfamily. In terms of assembly, homodimer. Binds to stalled ribosomes, contacting rRNA.

Its function is as follows. Endonuclease that is involved in the suppression of homologous recombination and thus may have a key role in the control of bacterial genetic diversity. Functionally, acts as a ribosome collision sensor, splitting the ribosome into its 2 subunits. Detects stalled/collided 70S ribosomes which it binds and splits by an ATP-hydrolysis driven conformational change. Acts upstream of the ribosome quality control system (RQC), a ribosome-associated complex that mediates the extraction of incompletely synthesized nascent chains from stalled ribosomes and their subsequent degradation. Probably generates substrates for RQC. The sequence is that of Endonuclease MutS2 from Enterococcus faecalis (strain ATCC 700802 / V583).